The following is a 200-amino-acid chain: Imidazole glycerol phosphate synthase subunit HisH (200 aa).

Residues 3 to 200 enclose the Glutamine amidotransferase type-1 domain; it reads DVALIDAGGA…LRNFLEMSFP (198 aa). C78 serves as the catalytic Nucleophile. Residues H179 and E181 contribute to the active site.

In terms of assembly, heterodimer of HisH and HisF.

It is found in the cytoplasm. The catalysed reaction is 5-[(5-phospho-1-deoxy-D-ribulos-1-ylimino)methylamino]-1-(5-phospho-beta-D-ribosyl)imidazole-4-carboxamide + L-glutamine = D-erythro-1-(imidazol-4-yl)glycerol 3-phosphate + 5-amino-1-(5-phospho-beta-D-ribosyl)imidazole-4-carboxamide + L-glutamate + H(+). It catalyses the reaction L-glutamine + H2O = L-glutamate + NH4(+). The protein operates within amino-acid biosynthesis; L-histidine biosynthesis; L-histidine from 5-phospho-alpha-D-ribose 1-diphosphate: step 5/9. Its function is as follows. IGPS catalyzes the conversion of PRFAR and glutamine to IGP, AICAR and glutamate. The HisH subunit catalyzes the hydrolysis of glutamine to glutamate and ammonia as part of the synthesis of IGP and AICAR. The resulting ammonia molecule is channeled to the active site of HisF. The polypeptide is Imidazole glycerol phosphate synthase subunit HisH (Xanthomonas axonopodis pv. citri (strain 306)).